A 565-amino-acid polypeptide reads, in one-letter code: Proline--tRNA ligase (565 aa).

The protein belongs to the class-II aminoacyl-tRNA synthetase family. ProS type 1 subfamily. Homodimer.

Its subcellular location is the cytoplasm. The enzyme catalyses tRNA(Pro) + L-proline + ATP = L-prolyl-tRNA(Pro) + AMP + diphosphate. Catalyzes the attachment of proline to tRNA(Pro) in a two-step reaction: proline is first activated by ATP to form Pro-AMP and then transferred to the acceptor end of tRNA(Pro). As ProRS can inadvertently accommodate and process non-cognate amino acids such as alanine and cysteine, to avoid such errors it has two additional distinct editing activities against alanine. One activity is designated as 'pretransfer' editing and involves the tRNA(Pro)-independent hydrolysis of activated Ala-AMP. The other activity is designated 'posttransfer' editing and involves deacylation of mischarged Ala-tRNA(Pro). The misacylated Cys-tRNA(Pro) is not edited by ProRS. This Lactobacillus acidophilus (strain ATCC 700396 / NCK56 / N2 / NCFM) protein is Proline--tRNA ligase.